The chain runs to 551 residues: Solute carrier family 22 member 6 (551 aa).

Over 1–9 (MAFNDLLKQ) the chain is Cytoplasmic. The helical transmembrane segment at 10-30 (VGGVGRFQLIQVTMVVAPLLL) threads the bilayer. The Extracellular portion of the chain corresponds to 31–135 (MASHNTLQNF…LVCSHRAFRQ (105 aa)). Residues Asn39, Asn56, Asn92, and Asn113 are each glycosylated (N-linked (GlcNAc...) asparagine). Residues 136–156 (LAQSLYMVGVLLGAMVFGYLA) form a helical membrane-spanning segment. Topologically, residues 157-164 (DRLGRRKV) are cytoplasmic. A helical transmembrane segment spans residues 165-187 (LILNYLQTAVSGTCAAYAPNYTV). Residues 188–195 (YCVFRLLS) lie on the Extracellular side of the membrane. The helical transmembrane segment at 196 to 216 (GMSLASIAINCMTLNVEWMPI) threads the bilayer. Over 217 to 224 (HTRAYVGT) the chain is Cytoplasmic. A helical membrane pass occupies residues 225 to 245 (LIGYVYSLGQFLLAGIAYAVP). At 246–248 (HWR) the chain is on the extracellular side. A helical membrane pass occupies residues 249–269 (HLQLVVSVPFFIAFIYSWFFI). Over 270–337 (ESARWYSSSG…ELLRCPTLRH (68 aa)) the chain is Cytoplasmic. The chain crosses the membrane as a helical span at residues 338-358 (LFLCLSMLWFATSFAYYGLVM). Residues 359 to 368 (DLQGFGVSMY) lie on the Extracellular side of the membrane. Residues 369–389 (LIQVIFGAVDLPAKFVCFLVI) form a helical membrane-spanning segment. Over 390–395 (NSMGRR) the chain is Cytoplasmic. A helical transmembrane segment spans residues 396 to 416 (PAQMASLLLAGICILVNGIIP). Residues 417–425 (KSHTIIRTS) are Extracellular-facing. A helical membrane pass occupies residues 426–446 (LAVLGKGCLASSFNCIFLYTG). At 447-484 (ELYPTVIRQTGLGMGSTMARVGSIVSPLVSMTAEFYPS) the chain is on the cytoplasmic side. Residues 485–505 (MPLFIFGAVPVVASAVTALLP) form a helical membrane-spanning segment. Topologically, residues 506–551 (ETLGQPLPDTVQDLKSRSRGKQNQQQQEQQKQMMPLQASTQEKNGL) are extracellular. Residues 514–551 (DTVQDLKSRSRGKQNQQQQEQQKQMMPLQASTQEKNGL) are disordered. Residues 526-537 (KQNQQQQEQQKQ) show a composition bias toward low complexity. Residues 542-551 (QASTQEKNGL) are compositionally biased toward polar residues.

The protein belongs to the major facilitator (TC 2.A.1) superfamily. Organic cation transporter (TC 2.A.1.19) family. Glycosylated. Glycosylation is necessary for proper targeting of the transporter to the plasma membrane. As to expression, highly expressed in kidney; in the particular segment of the proximal tubule. In kidney, found preferentially in the cortex and outer medulla and weakly in the inner medulla. Expressed to a lower extent in brain.

It is found in the cell membrane. Its subcellular location is the basolateral cell membrane. It localises to the basal cell membrane. The catalysed reaction is (6R)-L-erythro-5,6,7,8-tetrahydrobiopterin(out) + a dicarboxylate(in) = (6R)-L-erythro-5,6,7,8-tetrahydrobiopterin(in) + a dicarboxylate(out). It carries out the reaction L-erythro-7,8-dihydrobiopterin(out) + a dicarboxylate(in) = L-erythro-7,8-dihydrobiopterin(in) + a dicarboxylate(out). The enzyme catalyses L-sepiapterin(out) + a dicarboxylate(in) = L-sepiapterin(in) + a dicarboxylate(out). It catalyses the reaction prostaglandin F2alpha(out) + a dicarboxylate(in) = prostaglandin F2alpha(in) + a dicarboxylate(out). The catalysed reaction is prostaglandin E2(out) + a dicarboxylate(in) = prostaglandin E2(in) + a dicarboxylate(out). It carries out the reaction 3',5'-cyclic AMP(out) + a dicarboxylate(in) = 3',5'-cyclic AMP(in) + a dicarboxylate(out). The enzyme catalyses 3',5'-cyclic GMP(out) + a dicarboxylate(in) = 3',5'-cyclic GMP(in) + a dicarboxylate(out). It catalyses the reaction urate(out) + a dicarboxylate(in) = urate(in) + a dicarboxylate(out). The catalysed reaction is kynurenate(out) + glutarate(in) = kynurenate(in) + glutarate(out). It carries out the reaction (indol-3-yl)acetate(out) + a dicarboxylate(in) = (indol-3-yl)acetate(in) + a dicarboxylate(out). The enzyme catalyses indoxyl sulfate(out) + a dicarboxylate(in) = indoxyl sulfate(in) + a dicarboxylate(out). It catalyses the reaction N-benzoylglycine(out) + a dicarboxylate(in) = N-benzoylglycine(in) + a dicarboxylate(out). The catalysed reaction is 3-carboxy-4-methyl-5-propyl-2-furanpropanoate(out) + a dicarboxylate(in) = 3-carboxy-4-methyl-5-propyl-2-furanpropanoate(in) + a dicarboxylate(out). Functionally, secondary active transporter that functions as a Na(+)-independent organic anion (OA)/dicarboxylate antiporter where the uptake of one molecule of OA into the cell is coupled with an efflux of one molecule of intracellular dicarboxylate such as alpha-ketoglutarate or glutarate. Mediates the uptake of OA across the basolateral side of proximal tubule epithelial cells, thereby contributing to the renal elimination of endogenous OA from the systemic circulation into the urine. Function as a biopterin transporters involved in the uptake and the secretion of coenzymes tetrahydrobiopterin (BH4) dihydrobiopterin (BH2) and sepiapterin to urine, thereby determining baseline levels of blood biopterins. Transports prostaglandin E2 (PGE2) and prostaglandin F2-alpha (PGF2-alpha) and may contribute to their renal excretion. Also mediates the uptake of cyclic nucleotides such as cAMP and cGMP. Involved in the transport of neuroactive tryptophan metabolites kynurenate (KYNA) and xanthurenate (XA) and may contribute to their secretion from the brain. May transport glutamate. Also involved in the disposition of uremic toxins and potentially toxic xenobiotics by the renal organic anion secretory pathway, helping reduce their undesired toxicological effects on the body. Uremic toxins include the indoxyl sulfate (IS), hippurate, indole acetate (IA), 3-carboxy-4- methyl-5-propyl-2-furanpropionate(CMPF) and urate. Xenobiotics include the mycotoxin ochratoxin (OTA). May also contribute to the transport of organic compounds in testes across the blood-testis-barrier. May also work as a bidirectional OA/dicarboxylate exchanger. The chain is Solute carrier family 22 member 6 from Rattus norvegicus (Rat).